A 257-amino-acid chain; its full sequence is Homeobox protein ceh-36 (257 aa).

The segment covering 33 to 49 (SATTSSTTMAPMAPNSE) has biased composition (low complexity). Disordered regions lie at residues 33 to 63 (SATTSSTTMAPMAPNSESGRRAGRRERTSFN) and 113 to 156 (DRNN…GTPE). Residues 55–117 (GRRERTSFNR…NRRAKDRNNK (63 aa)) constitute a DNA-binding region (homeobox). Residues 123–137 (HPGSTSSRSSNGSPH) are compositionally biased toward low complexity.

The protein belongs to the paired homeobox family. Interacts with sox-2. As to expression, expressed in ASE and AWC chemosensory neurons. Expressed left-right asymmetrically in the embryo, in the grandmother cell and the mother cell to the MI pharyngeal motorneuron but in neither analogous precursors of the e3D neuron.

Its subcellular location is the nucleus. Probable transcription factor, acting as a progenitor identity factor regulating the development of lineally-related embryonic cells including glial, excretory and neuronal cells. Mediates chemosensory function of ASE and AWC neurons. In ASE neurons, required to diversify the fate of the ASEL neurons from the ASER neurons. Acts cell-autonomously to establish a neuronal left right asymmetry, possibly promoting asymmetric expression of the helix-loop-helix proteins ngn-1 and hlh-2. In cooperation with the transcription factor sox-2, required for the differentiation of AWC olfactory neurons. May regulate the expression of sox-2 in AWC olfactory neurons. This is Homeobox protein ceh-36 from Caenorhabditis elegans.